The sequence spans 658 residues: DNA ligase (658 aa).

Residues 32-36 (DAVYD) and 81-82 (SL) contribute to the NAD(+) site. Lys112 functions as the N6-AMP-lysine intermediate in the catalytic mechanism. Positions 133, 167, and 306 each coordinate NAD(+). Zn(2+) is bound by residues Cys400, Cys403, Cys416, and Cys421. Residues 577–658 (ESSSVFNNKT…LKRLKKLDQN (82 aa)) enclose the BRCT domain.

The protein belongs to the NAD-dependent DNA ligase family. LigA subfamily. It depends on Mg(2+) as a cofactor. Mn(2+) serves as cofactor.

It carries out the reaction NAD(+) + (deoxyribonucleotide)n-3'-hydroxyl + 5'-phospho-(deoxyribonucleotide)m = (deoxyribonucleotide)n+m + AMP + beta-nicotinamide D-nucleotide.. Functionally, DNA ligase that catalyzes the formation of phosphodiester linkages between 5'-phosphoryl and 3'-hydroxyl groups in double-stranded DNA using NAD as a coenzyme and as the energy source for the reaction. It is essential for DNA replication and repair of damaged DNA. The protein is DNA ligase of Helicobacter pylori (strain G27).